Consider the following 716-residue polypeptide: Antibacterial effector protein Tle3 (716 aa).

Residues proline 68–leucine 87 form a disordered region.

In terms of assembly, interacts in the cytoplasm with the adapter protein Tla3. Interacts in the periplasm with the immunity protein Tli3.

It is found in the secreted. The protein localises to the host periplasm. Neutralized by the immunity protein Tli3 in the periplasm of P.aeruginosa cells. In terms of biological role, antibacterial effector. Is toxic once delivered in the periplasm of prey bacteria. This is Antibacterial effector protein Tle3 from Pseudomonas aeruginosa (strain ATCC 15692 / DSM 22644 / CIP 104116 / JCM 14847 / LMG 12228 / 1C / PRS 101 / PAO1).